The sequence spans 421 residues: Probable indole-3-pyruvate monooxygenase YUCCA9 (421 aa).

29-34 (GAGPSG) provides a ligand contact to FAD. 196 to 201 (GCGNSG) provides a ligand contact to NADP(+).

It belongs to the FMO family. FAD serves as cofactor.

It carries out the reaction indole-3-pyruvate + NADPH + O2 + H(+) = (indol-3-yl)acetate + CO2 + NADP(+) + H2O. Its pathway is plant hormone metabolism; auxin biosynthesis. Its function is as follows. Involved in auxin biosynthesis. Belongs to the set of redundant YUCCA genes probably responsible for auxin biosynthesis in roots. This chain is Probable indole-3-pyruvate monooxygenase YUCCA9 (YUC9), found in Arabidopsis thaliana (Mouse-ear cress).